Reading from the N-terminus, the 95-residue chain is Co-chaperonin GroES (95 aa).

The protein belongs to the GroES chaperonin family. In terms of assembly, heptamer of 7 subunits arranged in a ring. Interacts with the chaperonin GroEL.

It localises to the cytoplasm. In terms of biological role, together with the chaperonin GroEL, plays an essential role in assisting protein folding. The GroEL-GroES system forms a nano-cage that allows encapsulation of the non-native substrate proteins and provides a physical environment optimized to promote and accelerate protein folding. GroES binds to the apical surface of the GroEL ring, thereby capping the opening of the GroEL channel. The sequence is that of Co-chaperonin GroES from Pseudoalteromonas translucida (strain TAC 125).